The primary structure comprises 292 residues: ATP synthase gamma chain (292 aa).

This sequence belongs to the ATPase gamma chain family. In terms of assembly, F-type ATPases have 2 components, CF(1) - the catalytic core - and CF(0) - the membrane proton channel. CF(1) has five subunits: alpha(3), beta(3), gamma(1), delta(1), epsilon(1). CF(0) has three main subunits: a, b and c.

Its subcellular location is the cell inner membrane. In terms of biological role, produces ATP from ADP in the presence of a proton gradient across the membrane. The gamma chain is believed to be important in regulating ATPase activity and the flow of protons through the CF(0) complex. This chain is ATP synthase gamma chain, found in Chlorobaculum tepidum (strain ATCC 49652 / DSM 12025 / NBRC 103806 / TLS) (Chlorobium tepidum).